The sequence spans 793 residues: DnaJ homolog subfamily C member 10 (793 aa).

Residues 1–32 (MGVWLSKDDYIRDLKRIILCFLIVYMAILVGT) form the signal peptide. The region spanning 35-100 (DFYSLLGVSK…DLRKKYDKYG (66 aa)) is the J domain. One can recognise a Thioredoxin 1 domain in the interval 130–232 (EIITLERREF…ESLVSFAMQH (103 aa)). Residues cysteine 158 and cysteine 161 are joined by a disulfide bond. Trxb regions lie at residues 235–350 (STVT…LPDF) and 348–463 (PDFE…PQNF). 3 consecutive Thioredoxin domains span residues 454 to 553 (HVTT…IEDL), 557 to 662 (SVVS…SLRI), and 671 to 778 (VSTG…INEK). Cysteine 480 and cysteine 483 form a disulfide bridge. The N-linked (GlcNAc...) asparagine glycan is linked to asparagine 530. Intrachain disulfides connect cysteine 588-cysteine 591 and cysteine 700-cysteine 703. The short motif at 790–793 (KDEL) is the Prevents secretion from ER element.

In terms of assembly, interacts with HSPA5 (via its J domain). Interacts with EDEM1.

Its subcellular location is the endoplasmic reticulum lumen. Endoplasmic reticulum disulfide reductase involved both in the correct folding of proteins and degradation of misfolded proteins. Required for efficient folding of proteins in the endoplasmic reticulum by catalyzing the removal of non-native disulfide bonds formed during the folding of proteins, such as LDLR. Also involved in endoplasmic reticulum-associated degradation (ERAD) by reducing incorrect disulfide bonds in misfolded glycoproteins recognized by EDEM1. Interaction with HSPA5 is required its activity, not for the disulfide reductase activity, but to facilitate the release of DNAJC10 from its substrate. Promotes apoptotic signaling pathway in response to endoplasmic reticulum stress. In Pongo abelii (Sumatran orangutan), this protein is DnaJ homolog subfamily C member 10 (DNAJC10).